A 524-amino-acid polypeptide reads, in one-letter code: Chromosomal replication initiator protein DnaA (524 aa).

Residues 1–72 form a domain I, interacts with DnaA modulators region; the sequence is MNDFWQHCSA…DLARDFWNAP (72 aa). The interval 72 to 187 is domain II; that stretch reads PIEVQFVLDP…GEADSMYERS (116 aa). Residues 188–404 form a domain III, AAA+ region region; the sequence is KLNPVLTFDN…GALRKILAYS (217 aa). Residues G232, G234, K235, and T236 each contribute to the ATP site. The domain IV, binds dsDNA stretch occupies residues 405 to 524; the sequence is KFHGREISIE…LHVLEQTLKG (120 aa).

This sequence belongs to the DnaA family. In terms of assembly, oligomerizes as a right-handed, spiral filament on DNA at oriC.

It is found in the cytoplasm. Functionally, plays an essential role in the initiation and regulation of chromosomal replication. ATP-DnaA binds to the origin of replication (oriC) to initiate formation of the DNA replication initiation complex once per cell cycle. Binds the DnaA box (a 9 base pair repeat at the origin) and separates the double-stranded (ds)DNA. Forms a right-handed helical filament on oriC DNA; dsDNA binds to the exterior of the filament while single-stranded (ss)DNA is stabiized in the filament's interior. The ATP-DnaA-oriC complex binds and stabilizes one strand of the AT-rich DNA unwinding element (DUE), permitting loading of DNA polymerase. After initiation quickly degrades to an ADP-DnaA complex that is not apt for DNA replication. Binds acidic phospholipids. This chain is Chromosomal replication initiator protein DnaA, found in Burkholderia multivorans (strain ATCC 17616 / 249).